A 98-amino-acid chain; its full sequence is Citrate lyase acyl carrier protein (98 aa).

Serine 14 is modified (O-(phosphoribosyl dephospho-coenzyme A)serine).

It belongs to the CitD family. In terms of assembly, oligomer with a subunit composition of (alpha,beta,gamma)6.

The protein localises to the cytoplasm. Covalent carrier of the coenzyme of citrate lyase. This Shigella boydii serotype 18 (strain CDC 3083-94 / BS512) protein is Citrate lyase acyl carrier protein.